The sequence spans 396 residues: Peptide chain release factor 1, mitochondrial (396 aa).

N5-methylglutamine is present on Gln-268. The disordered stretch occupies residues 317–340 (LEKEEKERNARKDQVSTTDRSDKI).

The protein belongs to the prokaryotic/mitochondrial release factor family. Methylation of glutamine in the GGQ triplet is conserved from bacteria to mammals.

The protein resides in the mitochondrion. Mitochondrial peptide chain release factor that directs the termination of translation in response to the peptide chain termination codons UAA and UAG. This is Peptide chain release factor 1, mitochondrial (MRF1) from Kluyveromyces lactis (strain ATCC 8585 / CBS 2359 / DSM 70799 / NBRC 1267 / NRRL Y-1140 / WM37) (Yeast).